A 170-amino-acid chain; its full sequence is Large ribosomal subunit protein uL11 (170 aa).

The protein belongs to the universal ribosomal protein uL11 family. Part of the ribosomal stalk of the 50S ribosomal subunit. Interacts with L10 and the large rRNA to form the base of the stalk. L10 forms an elongated spine to which L12 dimers bind in a sequential fashion forming a multimeric L10(L12)X complex.

Forms part of the ribosomal stalk which helps the ribosome interact with GTP-bound translation factors. This is Large ribosomal subunit protein uL11 from Desulfurococcus amylolyticus (strain DSM 18924 / JCM 16383 / VKM B-2413 / 1221n) (Desulfurococcus kamchatkensis).